Here is a 198-residue protein sequence, read N- to C-terminus: Recombination protein RecR (198 aa).

Residues 58-73 form a C4-type zinc finger; sequence CSVCGNFTDTDPCAIC. In terms of domain architecture, Toprim spans 81–175; the sequence is DIICVVEQPK…KVTRIAAGIP (95 aa).

This sequence belongs to the RecR family.

Functionally, may play a role in DNA repair. It seems to be involved in an RecBC-independent recombinational process of DNA repair. It may act with RecF and RecO. In Clostridium perfringens (strain ATCC 13124 / DSM 756 / JCM 1290 / NCIMB 6125 / NCTC 8237 / Type A), this protein is Recombination protein RecR.